A 118-amino-acid chain; its full sequence is uncharacterized protein (118 aa).

Residues 1–26 (MTKLKMLSMLTVMIASLFIFSSQALA) form the signal peptide. Residues 30–104 (FTVSTSSGAP…VNIGYVSDTY (75 aa)) form the SH3b domain.

This sequence to B.subtilis YraI.

This is an uncharacterized protein from Bacillus subtilis (strain 168).